The primary structure comprises 391 residues: NADH-quinone oxidoreductase subunit D (391 aa).

The protein belongs to the complex I 49 kDa subunit family. As to quaternary structure, NDH-1 is composed of 14 different subunits. Subunits NuoB, C, D, E, F, and G constitute the peripheral sector of the complex.

Its subcellular location is the cell inner membrane. It catalyses the reaction a quinone + NADH + 5 H(+)(in) = a quinol + NAD(+) + 4 H(+)(out). Functionally, NDH-1 shuttles electrons from NADH, via FMN and iron-sulfur (Fe-S) centers, to quinones in the respiratory chain. The immediate electron acceptor for the enzyme in this species is believed to be ubiquinone. Couples the redox reaction to proton translocation (for every two electrons transferred, four hydrogen ions are translocated across the cytoplasmic membrane), and thus conserves the redox energy in a proton gradient. The protein is NADH-quinone oxidoreductase subunit D of Rickettsia akari (strain Hartford).